Here is a 185-residue protein sequence, read N- to C-terminus: MYLFINIIRRNFISKNNFPKANREIRAREVRLVGENGEMHGVVNIRKALDMAERASLDLVEISPNAVPPVCKILDFGKFKYESKKRLHEARKKQKIVVLKEMKFKPNISIGDFETKLRKIKEFLKDGDKVKISLWFKGREILHKEVGQELFKRIEVGLEGPIKIDQHAKMEGKQMIMIVSPDIKV.

This sequence belongs to the IF-3 family. As to quaternary structure, monomer.

The protein resides in the cytoplasm. Its function is as follows. IF-3 binds to the 30S ribosomal subunit and shifts the equilibrium between 70S ribosomes and their 50S and 30S subunits in favor of the free subunits, thus enhancing the availability of 30S subunits on which protein synthesis initiation begins. The polypeptide is Translation initiation factor IF-3 (Rickettsia felis (strain ATCC VR-1525 / URRWXCal2) (Rickettsia azadi)).